Consider the following 96-residue polypeptide: Small ribosomal subunit protein bS6 (96 aa).

This sequence belongs to the bacterial ribosomal protein bS6 family.

Functionally, binds together with bS18 to 16S ribosomal RNA. This Streptococcus uberis (strain ATCC BAA-854 / 0140J) protein is Small ribosomal subunit protein bS6.